Consider the following 312-residue polypeptide: MASYLDFEKNIQQIDEDIINAQIKGDTEAVSILKKNLEKEISKTYKNLSDFQRLQLARHPDRPYALDYIELILNDAHEIHGDRAFRDDPAIVCFMGYLGEKKIIVIGEQKGRGTKDKIARNFGMPHPEGYRKALRVARLAEKFQIPILFLIDTPGAYPGIGAEERGQSEAIARNLYELSDLKIPTIAIVIGEGGSGGALAIGVADRLAMMKNSVFSVISPEGCAAILWNDPAKSEAATKAMKVTADDLKSQGLIDDVIDEPTNGAHRNKEAAAVAIADYVKKSLNELENIDVRELSANRMQKILKLGAYQEA.

The CoA carboxyltransferase C-terminal domain maps to 36 to 286 (NLEKEISKTY…ADYVKKSLNE (251 aa)).

Belongs to the AccA family. In terms of assembly, acetyl-CoA carboxylase is a heterohexamer composed of biotin carboxyl carrier protein (AccB), biotin carboxylase (AccC) and two subunits each of ACCase subunit alpha (AccA) and ACCase subunit beta (AccD).

The protein resides in the cytoplasm. The catalysed reaction is N(6)-carboxybiotinyl-L-lysyl-[protein] + acetyl-CoA = N(6)-biotinyl-L-lysyl-[protein] + malonyl-CoA. Its pathway is lipid metabolism; malonyl-CoA biosynthesis; malonyl-CoA from acetyl-CoA: step 1/1. Its function is as follows. Component of the acetyl coenzyme A carboxylase (ACC) complex. First, biotin carboxylase catalyzes the carboxylation of biotin on its carrier protein (BCCP) and then the CO(2) group is transferred by the carboxyltransferase to acetyl-CoA to form malonyl-CoA. The sequence is that of Acetyl-coenzyme A carboxylase carboxyl transferase subunit alpha from Campylobacter jejuni subsp. jejuni serotype O:6 (strain 81116 / NCTC 11828).